The primary structure comprises 161 residues: Chaperone protein dnaJ 11, chloroplastic (161 aa).

Low complexity predominate over residues 1 to 18 (MLSSSPTSFTHPFLSSSP). Positions 1–31 (MLSSSPTSFTHPFLSSSPPLSPISPPSRTAR) are disordered. Residues 1-36 (MLSSSPTSFTHPFLSSSPPLSPISPPSRTARISPPL) constitute a chloroplast transit peptide. Residues 65 to 133 (SLYDVLEVPL…EKRSVYDRRM (69 aa)) enclose the J domain.

Belongs to the DnaJ family. C/III subfamily. As to expression, expressed in roots, stems, leaves, flowers and developing siliques.

Its subcellular location is the plastid. The protein resides in the chloroplast stroma. In terms of biological role, plays a continuous role in plant development probably in the structural organization of compartments. The sequence is that of Chaperone protein dnaJ 11, chloroplastic (ATJ11) from Arabidopsis thaliana (Mouse-ear cress).